The primary structure comprises 136 residues: Protein NrdI (136 aa).

This sequence belongs to the NrdI family.

Functionally, probably involved in ribonucleotide reductase function. The chain is Protein NrdI from Salmonella arizonae (strain ATCC BAA-731 / CDC346-86 / RSK2980).